The primary structure comprises 170 residues: Transcriptional repressor NrdR (170 aa).

The segment at 3-34 (CPFCRHPDSRVVDSRTSEDGSSIRRRRQCPEC) is a zinc-finger region. The ATP-cone domain maps to 46–136 (LSVVKRSGVA…VYRGFSSLED (91 aa)). The disordered stretch occupies residues 148–170 (RENEGDPDADGSADAPVRLTTSV).

The protein belongs to the NrdR family. Requires Zn(2+) as cofactor.

Functionally, negatively regulates transcription of bacterial ribonucleotide reductase nrd genes and operons by binding to NrdR-boxes. The polypeptide is Transcriptional repressor NrdR (Beutenbergia cavernae (strain ATCC BAA-8 / DSM 12333 / CCUG 43141 / JCM 11478 / NBRC 16432 / NCIMB 13614 / HKI 0122)).